Reading from the N-terminus, the 429-residue chain is Histidinol dehydrogenase (429 aa).

3 residues coordinate NAD(+): Y130, Q191, and N214. 3 residues coordinate substrate: S237, Q259, and H262. Q259 and H262 together coordinate Zn(2+). Active-site proton acceptor residues include E327 and H328. Residues H328, D361, E415, and H420 each coordinate substrate. D361 is a Zn(2+) binding site. H420 provides a ligand contact to Zn(2+).

The protein belongs to the histidinol dehydrogenase family. The cofactor is Zn(2+).

It catalyses the reaction L-histidinol + 2 NAD(+) + H2O = L-histidine + 2 NADH + 3 H(+). It functions in the pathway amino-acid biosynthesis; L-histidine biosynthesis; L-histidine from 5-phospho-alpha-D-ribose 1-diphosphate: step 9/9. Catalyzes the sequential NAD-dependent oxidations of L-histidinol to L-histidinaldehyde and then to L-histidine. This Neisseria gonorrhoeae (strain ATCC 700825 / FA 1090) protein is Histidinol dehydrogenase.